The sequence spans 401 residues: Phosphoglycerate kinase (401 aa).

Substrate is bound by residues 23–25 (DFN), Arg39, 62–65 (HLGR), Arg121, and Arg154. ATP contacts are provided by residues Lys207, Gly298, Glu329, and 355-358 (GGDT).

Belongs to the phosphoglycerate kinase family. Monomer.

Its subcellular location is the cytoplasm. The enzyme catalyses (2R)-3-phosphoglycerate + ATP = (2R)-3-phospho-glyceroyl phosphate + ADP. It participates in carbohydrate degradation; glycolysis; pyruvate from D-glyceraldehyde 3-phosphate: step 2/5. The chain is Phosphoglycerate kinase from Campylobacter fetus subsp. fetus (strain 82-40).